A 620-amino-acid polypeptide reads, in one-letter code: Glutathione-regulated potassium-efflux system protein KefC (620 aa).

A run of 12 helical transmembrane segments spans residues 4-24, 26-46, 54-74, 90-110, 114-134, 149-169, 178-198, 218-238, 270-290, 294-314, 327-347, and 359-379; these read HTLM…PIAV, LGLG…PWGL, SILH…GLEL, GALQ…FLGL, VAEL…MQAM, FAVL…IPLL, LGAF…VVLL, VFSA…EEVG, GLLL…GTLV, LRIL…LWLI, WFAV…GAAQ, and ALTL…VLLT. One can recognise an RCK N-terminal domain in the interval 399 to 518; sequence QPRVIVAGFG…AGVAMPERET (120 aa). The disordered stretch occupies residues 599-620; the sequence is QGTAEGKHTGDIADEPQVKPST.

Belongs to the monovalent cation:proton antiporter 2 (CPA2) transporter (TC 2.A.37) family. KefC subfamily. As to quaternary structure, homodimer. Interacts with the regulatory subunit KefF.

The protein resides in the cell inner membrane. Functionally, pore-forming subunit of a potassium efflux system that confers protection against electrophiles. Catalyzes K(+)/H(+) antiport. This is Glutathione-regulated potassium-efflux system protein KefC from Salmonella arizonae (strain ATCC BAA-731 / CDC346-86 / RSK2980).